A 139-amino-acid chain; its full sequence is Asp-hemolysin (139 aa).

Positions 1–5 are excised as a propeptide; sequence MASVQ. The disordered stretch occupies residues 47–79; it reads TSEDVQQKTAPPGGSVNVNSCGRSDASSGTTGG. Over residues 62-75 the composition is skewed to polar residues; that stretch reads VNVNSCGRSDASSG.

Belongs to the aegerolysin family.

This chain is Asp-hemolysin, found in Aspergillus fumigatus (strain ATCC MYA-4609 / CBS 101355 / FGSC A1100 / Af293) (Neosartorya fumigata).